The following is a 115-amino-acid chain: UPF0127 protein PH1112 (115 aa).

This sequence belongs to the UPF0127 family.

The sequence is that of UPF0127 protein PH1112 from Pyrococcus horikoshii (strain ATCC 700860 / DSM 12428 / JCM 9974 / NBRC 100139 / OT-3).